Consider the following 273-residue polypeptide: Ribosomal RNA small subunit methyltransferase A (273 aa).

S-adenosyl-L-methionine is bound by residues Asn-18, Leu-20, Gly-45, Glu-66, Asp-91, and Asn-113.

It belongs to the class I-like SAM-binding methyltransferase superfamily. rRNA adenine N(6)-methyltransferase family. RsmA subfamily.

The protein resides in the cytoplasm. The catalysed reaction is adenosine(1518)/adenosine(1519) in 16S rRNA + 4 S-adenosyl-L-methionine = N(6)-dimethyladenosine(1518)/N(6)-dimethyladenosine(1519) in 16S rRNA + 4 S-adenosyl-L-homocysteine + 4 H(+). Its function is as follows. Specifically dimethylates two adjacent adenosines (A1518 and A1519) in the loop of a conserved hairpin near the 3'-end of 16S rRNA in the 30S particle. May play a critical role in biogenesis of 30S subunits. This Shigella boydii serotype 18 (strain CDC 3083-94 / BS512) protein is Ribosomal RNA small subunit methyltransferase A.